Consider the following 227-residue polypeptide: ATP-dependent dethiobiotin synthetase BioD (227 aa).

13–18 is an ATP binding site; it reads DIGKTY. A Mg(2+)-binding site is contributed by Thr-17. Lys-38 is an active-site residue. Ser-42 is a binding site for substrate. ATP is bound by residues Asp-55, 116–119, and 179–180; these read EGSG and NN. The Mg(2+) site is built by Asp-55 and Glu-116.

This sequence belongs to the dethiobiotin synthetase family. As to quaternary structure, homodimer. Mg(2+) is required as a cofactor.

Its subcellular location is the cytoplasm. It catalyses the reaction (7R,8S)-7,8-diammoniononanoate + CO2 + ATP = (4R,5S)-dethiobiotin + ADP + phosphate + 3 H(+). Its pathway is cofactor biosynthesis; biotin biosynthesis; biotin from 7,8-diaminononanoate: step 1/2. Functionally, catalyzes a mechanistically unusual reaction, the ATP-dependent insertion of CO2 between the N7 and N8 nitrogen atoms of 7,8-diaminopelargonic acid (DAPA, also called 7,8-diammoniononanoate) to form a ureido ring. The chain is ATP-dependent dethiobiotin synthetase BioD from Clostridium botulinum (strain Loch Maree / Type A3).